A 49-amino-acid chain; its full sequence is Unknown protein from spot 75 of 2D-PAGE of etiolated coleoptile (49 aa).

The sequence is that of Unknown protein from spot 75 of 2D-PAGE of etiolated coleoptile from Zea mays (Maize).